The following is a 241-amino-acid chain: Cysteine-rich secretory protein 3 (241 aa).

A signal peptide spans Met-1 to Leu-19. Residues Ser-44 to Tyr-170 form the SCP domain. Residues Asn-118, Asn-132, and Asn-175 are each glycosylated (N-linked (GlcNAc...) asparagine). Cystine bridges form between Cys-194–Cys-201, Cys-197–Cys-206, Cys-210–Cys-241, Cys-219–Cys-235, and Cys-226–Cys-239. A ShKT domain is found at Cys-210 to Cys-241.

It belongs to the CRISP family. As to quaternary structure, interacts with A1BG. Interacts with KNG1 isoform LMW. In terms of tissue distribution, expressed in submandibular gland.

It is found in the cytoplasmic vesicle. Its subcellular location is the secretory vesicle. In terms of biological role, this protein is supposed to help spermatozoa undergo functional maturation while they move from the testis to the ductus deferens. In Mus musculus (Mouse), this protein is Cysteine-rich secretory protein 3 (Crisp3).